The sequence spans 36 residues: Pancreatic polypeptide (36 aa).

A Tyrosine amide modification is found at Y36.

The protein belongs to the NPY family.

The protein localises to the secreted. In terms of biological role, hormone secreted by pancreatic cells that acts as a regulator of pancreatic and gastrointestinal functions. This Meleagris gallopavo (Wild turkey) protein is Pancreatic polypeptide (PPY).